We begin with the raw amino-acid sequence, 249 residues long: Sugar fermentation stimulation protein homolog (249 aa).

It belongs to the SfsA family.

In Synechococcus sp. (strain RCC307), this protein is Sugar fermentation stimulation protein homolog.